The sequence spans 98 residues: MSDPRKESLIVERFEMRASTEPKEGELELYSLFSIIFGFLGIMLKYKICLWVSAVCCVAYLSNLKSKDSSVRTILSPVSLSLMGLVMAYFGPNSNLFV.

2 consecutive transmembrane segments (helical) span residues leucine 32–valine 52 and valine 78–valine 98.

This sequence belongs to the Asterix family.

The protein resides in the membrane. This Dictyostelium discoideum (Social amoeba) protein is Protein Asterix.